A 311-amino-acid polypeptide reads, in one-letter code: Small ribosomal subunit biogenesis GTPase RsgA (311 aa).

In terms of domain architecture, CP-type G spans 77-239; the sequence is LSKQSHIIAT…IIDTPGIKGF (163 aa). Residues 126 to 129 and 180 to 188 contribute to the GTP site; these read NKTD and GHSGVGKST. Zn(2+)-binding residues include C263, C268, H270, and C276.

This sequence belongs to the TRAFAC class YlqF/YawG GTPase family. RsgA subfamily. Monomer. Associates with 30S ribosomal subunit, binds 16S rRNA. It depends on Zn(2+) as a cofactor.

It localises to the cytoplasm. In terms of biological role, one of several proteins that assist in the late maturation steps of the functional core of the 30S ribosomal subunit. Helps release RbfA from mature subunits. May play a role in the assembly of ribosomal proteins into the subunit. Circularly permuted GTPase that catalyzes slow GTP hydrolysis, GTPase activity is stimulated by the 30S ribosomal subunit. The sequence is that of Small ribosomal subunit biogenesis GTPase RsgA from Azobacteroides pseudotrichonymphae genomovar. CFP2.